The sequence spans 790 residues: Nuclear cap-binding protein subunit 1 (790 aa).

The segment at 1–26 (MSRRRHSDENDGGQPHKRRKTSDANE) is disordered. Residues 3–20 (RRRHSDENDGGQPHKRRK) carry the Nuclear localization signal motif. Serine 7 bears the Phosphoserine; by RPS6KB1 mark. Position 21 is a phosphothreonine; by RPS6KB1 (threonine 21). Serine 22 is modified (phosphoserine; by RPS6KB1). Residues 28-240 (EDHLESLICK…CLWAQIQKLK (213 aa)) form the MIF4G domain. A Phosphoserine modification is found at serine 201. Lysine 204 is subject to N6-acetyllysine. Positions 643–713 (STIRKMNKHV…SEQKNLFLVI (71 aa)) form a coiled coil. Lysine 684 is covalently cross-linked (Glycyl lysine isopeptide (Lys-Gly) (interchain with G-Cter in SUMO2)). Lysine 698 carries the N6-acetyllysine modification.

This sequence belongs to the NCBP1 family. As to quaternary structure, component of the nuclear cap-binding complex (CBC), a heterodimer composed of NCBP1/CBP80 and NCBP2/CBP20 that interacts with m7GpppG-capped RNA. Found in a U snRNA export complex containing PHAX/RNUXA, NCBP1/CBP80, NCBP2/CBP20, RAN, XPO1 and m7G-capped RNA. Identified in a IGF2BP1-dependent mRNP granule complex containing untranslated mRNAs. Interacts with PHAX/RNUXA, SRRT/ARS2, EIF4G2, IGF2BP1, HNRNPF, HNRNPH1, KIAA0427/CTIF, PARN, DROSHA, UPF1 and ALYREF/THOC4. May interact with EIF4G1; the interaction is however controversial since it is reported by PubMed:11340157, PubMed:15059963 and PubMed:15361857, but is not observed by PubMed:19648179. The large PER complex involved in the repression of transcriptional termination is composed of at least PER2, CDK9, DDX5, DHX9, NCBP1/CBP80 and POLR2A. Component of an alternative nuclear cap-binding complex (CBC) composed of NCBP1/CBP80 and NCBP3. Interacts with METTL3. Interacts with ZFC3H1 in a RNase-insensitive manner. Interacts with MTREX. Interacts with TASOR. Interacts with DHX34; the interaction is RNA-dependent. Interacts with KPNA3. Dephosphorylated at Thr-21 by the PNUTS-PP1 complex during RNA polymerase II transcription pause-release.

It is found in the nucleus. The protein resides in the cytoplasm. Component of the cap-binding complex (CBC), which binds cotranscriptionally to the 5'-cap of pre-mRNAs and is involved in various processes such as pre-mRNA splicing, translation regulation, nonsense-mediated mRNA decay, RNA-mediated gene silencing (RNAi) by microRNAs (miRNAs) and mRNA export. The CBC complex is involved in mRNA export from the nucleus via its interaction with ALYREF/THOC4/ALY, leading to the recruitment of the mRNA export machinery to the 5'-end of mRNA and to mRNA export in a 5' to 3' direction through the nuclear pore. The CBC complex is also involved in mediating U snRNA and intronless mRNAs export from the nucleus. The CBC complex is essential for a pioneer round of mRNA translation, before steady state translation when the CBC complex is replaced by cytoplasmic cap-binding protein eIF4E. The pioneer round of mRNA translation mediated by the CBC complex plays a central role in nonsense-mediated mRNA decay (NMD), NMD only taking place in mRNAs bound to the CBC complex, but not on eIF4E-bound mRNAs. The CBC complex enhances NMD in mRNAs containing at least one exon-junction complex (EJC) via its interaction with UPF1, promoting the interaction between UPF1 and UPF2. The CBC complex is also involved in 'failsafe' NMD, which is independent of the EJC complex, while it does not participate in Staufen-mediated mRNA decay (SMD). During cell proliferation, the CBC complex is also involved in microRNAs (miRNAs) biogenesis via its interaction with SRRT/ARS2 and is required for miRNA-mediated RNA interference. The CBC complex also acts as a negative regulator of PARN, thereby acting as an inhibitor of mRNA deadenylation. In the CBC complex, NCBP1/CBP80 does not bind directly capped RNAs (m7GpppG-capped RNA) but is required to stabilize the movement of the N-terminal loop of NCBP2/CBP20 and lock the CBC into a high affinity cap-binding state with the cap structure. Associates with NCBP3 to form an alternative cap-binding complex (CBC) which plays a key role in mRNA export and is particularly important in cellular stress situations such as virus infections. The conventional CBC with NCBP2 binds both small nuclear RNA (snRNA) and messenger (mRNA) and is involved in their export from the nucleus whereas the alternative CBC with NCBP3 does not bind snRNA and associates only with mRNA thereby playing a role only in mRNA export. NCBP1/CBP80 is required for cell growth and viability. The sequence is that of Nuclear cap-binding protein subunit 1 (NCBP1) from Homo sapiens (Human).